The primary structure comprises 431 residues: L-cysteine:1D-myo-inositol 2-amino-2-deoxy-alpha-D-glucopyranoside ligase (431 aa).

Residue C44 coordinates Zn(2+). L-cysteinyl-5'-AMP-binding positions include 44-47 (CGIT), T59, and 82-84 (NVT). A 'HIGH' region motif is present at residues 46–56 (ITPYDATHLGH). Positions 187–192 (ERGGDP) match the 'ERGGDP' region motif. An L-cysteinyl-5'-AMP-binding site is contributed by W227. C231 serves as a coordination point for Zn(2+). 249–251 (GND) serves as a coordination point for L-cysteinyl-5'-AMP. Residue H256 coordinates Zn(2+). An L-cysteinyl-5'-AMP-binding site is contributed by I283. The short motif at 289–293 (KMSKS) is the 'KMSKS' region element.

It belongs to the class-I aminoacyl-tRNA synthetase family. MshC subfamily. As to quaternary structure, monomer. It depends on Zn(2+) as a cofactor.

It catalyses the reaction 1D-myo-inositol 2-amino-2-deoxy-alpha-D-glucopyranoside + L-cysteine + ATP = 1D-myo-inositol 2-(L-cysteinylamino)-2-deoxy-alpha-D-glucopyranoside + AMP + diphosphate + H(+). Catalyzes the ATP-dependent condensation of GlcN-Ins and L-cysteine to form L-Cys-GlcN-Ins. The protein is L-cysteine:1D-myo-inositol 2-amino-2-deoxy-alpha-D-glucopyranoside ligase of Stackebrandtia nassauensis (strain DSM 44728 / CIP 108903 / NRRL B-16338 / NBRC 102104 / LLR-40K-21).